A 312-amino-acid chain; its full sequence is Acetylglutamate kinase (312 aa).

Residues 74–75 (GG), Arg96, and Asn195 contribute to the substrate site.

It belongs to the acetylglutamate kinase family. ArgB subfamily.

Its subcellular location is the cytoplasm. The catalysed reaction is N-acetyl-L-glutamate + ATP = N-acetyl-L-glutamyl 5-phosphate + ADP. The protein operates within amino-acid biosynthesis; L-arginine biosynthesis; N(2)-acetyl-L-ornithine from L-glutamate: step 2/4. In terms of biological role, catalyzes the ATP-dependent phosphorylation of N-acetyl-L-glutamate. This Nocardioides sp. (strain ATCC BAA-499 / JS614) protein is Acetylglutamate kinase.